A 448-amino-acid polypeptide reads, in one-letter code: Rhodanese-like domain-containing protein 8, chloroplastic (448 aa).

A chloroplast-targeting transit peptide spans 1 to 23 (MRVSPAATLSVSLTTPLPITLTK). The region spanning 220–323 (SGKSYILLDV…YLKEEGTAEW (104 aa)) is the Rhodanese domain. Cysteine 283 acts as the Cysteine persulfide intermediate in catalysis.

It localises to the plastid. It is found in the chloroplast. This is Rhodanese-like domain-containing protein 8, chloroplastic (STR8) from Arabidopsis thaliana (Mouse-ear cress).